Reading from the N-terminus, the 207-residue chain is Large ribosomal subunit protein uL4 (207 aa).

Positions 54 to 76 are disordered; it reads RSAVRGGGRKPWRQKGTGRARQG. The span at 60–71 shows a compositional bias: basic residues; the sequence is GGRKPWRQKGTG.

This sequence belongs to the universal ribosomal protein uL4 family. Part of the 50S ribosomal subunit.

Its function is as follows. One of the primary rRNA binding proteins, this protein initially binds near the 5'-end of the 23S rRNA. It is important during the early stages of 50S assembly. It makes multiple contacts with different domains of the 23S rRNA in the assembled 50S subunit and ribosome. Forms part of the polypeptide exit tunnel. This chain is Large ribosomal subunit protein uL4, found in Staphylococcus haemolyticus (strain JCSC1435).